The primary structure comprises 99 residues: DNA-directed RNA polymerase subunit omega (99 aa).

The protein belongs to the RNA polymerase subunit omega family. As to quaternary structure, the RNAP catalytic core consists of 2 alpha, 1 beta, 1 beta' and 1 omega subunit. When a sigma factor is associated with the core the holoenzyme is formed, which can initiate transcription.

It catalyses the reaction RNA(n) + a ribonucleoside 5'-triphosphate = RNA(n+1) + diphosphate. Its function is as follows. Promotes RNA polymerase assembly. Latches the N- and C-terminal regions of the beta' subunit thereby facilitating its interaction with the beta and alpha subunits. The polypeptide is DNA-directed RNA polymerase subunit omega (Thermus thermophilus (strain ATCC BAA-163 / DSM 7039 / HB27)).